An 87-amino-acid polypeptide reads, in one-letter code: Small ribosomal subunit protein uS17 (87 aa).

The protein belongs to the universal ribosomal protein uS17 family. Part of the 30S ribosomal subunit.

In terms of biological role, one of the primary rRNA binding proteins, it binds specifically to the 5'-end of 16S ribosomal RNA. The polypeptide is Small ribosomal subunit protein uS17 (Pelotomaculum thermopropionicum (strain DSM 13744 / JCM 10971 / SI)).